Reading from the N-terminus, the 380-residue chain is L-lactate dehydrogenase (380 aa).

One can recognise an FMN hydroxy acid dehydrogenase domain in the interval 1 to 380; the sequence is MIISSASDYR…DASILVKAVA (380 aa). Tyr-24 is a binding site for substrate. Ser-106 and Gln-127 together coordinate FMN. Tyr-129 provides a ligand contact to substrate. Thr-155 contacts FMN. Arg-164 lines the substrate pocket. Lys-251 lines the FMN pocket. The Proton acceptor role is filled by His-275. Position 278 (Arg-278) interacts with substrate. 306 to 330 contacts FMN; sequence DSGIRSGLDVVRMLALGAKGVLLGR.

This sequence belongs to the FMN-dependent alpha-hydroxy acid dehydrogenase family. As to quaternary structure, homotetramer. Requires FMN as cofactor.

The protein resides in the cell inner membrane. The enzyme catalyses (S)-lactate + A = pyruvate + AH2. Functionally, catalyzes the conversion of L-lactate to pyruvate. Is coupled to the respiratory chain. This Pseudomonas syringae pv. syringae (strain B728a) protein is L-lactate dehydrogenase.